Reading from the N-terminus, the 563-residue chain is Eukaryotic translation initiation factor 3 subunit D-1 (563 aa).

The tract at residues 98 to 167 (VQKPPHQRGR…GPPPKMRESS (70 aa)) is disordered. A compositionally biased stretch (basic residues) spans 100 to 121 (KPPHQRGRFRNMRNSRSGRGRN). A Phosphothreonine modification is found at T128. The RNA gate stretch occupies residues 291-305 (EFDLLTVNETSVEPP).

The protein belongs to the eIF-3 subunit D family. Component of the eukaryotic translation initiation factor 3 (eIF-3) complex. The eIF-3 complex interacts with pix.

It localises to the cytoplasm. Its function is as follows. mRNA cap-binding component of the eukaryotic translation initiation factor 3 (eIF-3) complex, which is involved in protein synthesis of a specialized repertoire of mRNAs and, together with other initiation factors, stimulates binding of mRNA and methionyl-tRNAi to the 40S ribosome. The eIF-3 complex specifically targets and initiates translation of a subset of mRNAs involved in cell proliferation. In the eIF-3 complex, eif3d specifically recognizes and binds the 7-methylguanosine cap of a subset of mRNAs. The polypeptide is Eukaryotic translation initiation factor 3 subunit D-1 (Drosophila virilis (Fruit fly)).